The primary structure comprises 642 residues: MKVTFMNLEERKKLETKSIDELDLIGKKVCVDTCVVIDGRITELIERGKLKDATIIIPEAVVSELEYQANMGREIGYKGIEELRKLIEKASEHNIKVEYYGERPTREEIFLAKSGEIDAMIRKVAKETNSILLTSDWIQYNLAKAQGIEAYFLEAAEEEVELVLDKYFDEETMSVHLKEGCLPYAKKGKPGEVKLVPIGDKELTKEEMEDIIDNIIKYAEQNNGFFEIQRKGATVIQLGNIRISIARPPFSEALEVTAVRPVVKASLEDYELSDKLMERLKERAEGIFVSGPPGSGKSTFVAALAEFYRSQGKIVKTMESPRDLQVSKEITQYAPLEGDMEKTCDILLLVRPDYTIYDEVRKTRDFEIFADMRMAGVGMVGVVHASKPIDAIQRLIGRVELGVIPQVVDTVIFIKDGKIQKVYEIDFTVKVPYGMVEEDLARPVIEVKDFETGRVEYEIYTYGEQVVVMPIKEEGGKKAPIYGYAEEKLEEILKKLLPRKAKPMVKVTGDNSIDLIVPEKYIGAIIGKGGKEISKLEDMLGLKISVKEKEKEEEKDMERIYRKYEYVNELESTRIYETDKYVVVDVGEDFAGENIRIYIDGKLLTTVTVRNDGTVRINKKTKVGKEILEAIDEGRDIYVDLQ.

Mg(2+) is bound by residues Glu15 and Asp118. Residues 29-149 (VCVDTCVVID…YNLAKAQGIE (121 aa)) form the PINc domain. One can recognise a KH domain in the interval 510–578 (DNSIDLIVPE…ELESTRIYET (69 aa)).

This sequence in the N-terminal section; belongs to the PINc/VapC protein family. Requires Mg(2+) as cofactor.

This is an uncharacterized protein from Methanocaldococcus jannaschii (strain ATCC 43067 / DSM 2661 / JAL-1 / JCM 10045 / NBRC 100440) (Methanococcus jannaschii).